The chain runs to 108 residues: Thiosulfate sulfurtransferase GlpE (108 aa).

One can recognise a Rhodanese domain in the interval 18-106 (QNEDAVLVDI…WVRSELPIEL (89 aa)). The Cysteine persulfide intermediate role is filled by Cys-66.

Belongs to the GlpE family.

It is found in the cytoplasm. The enzyme catalyses thiosulfate + hydrogen cyanide = thiocyanate + sulfite + 2 H(+). It carries out the reaction thiosulfate + [thioredoxin]-dithiol = [thioredoxin]-disulfide + hydrogen sulfide + sulfite + 2 H(+). Functionally, transferase that catalyzes the transfer of sulfur from thiosulfate to thiophilic acceptors such as cyanide or dithiols. May function in a CysM-independent thiosulfate assimilation pathway by catalyzing the conversion of thiosulfate to sulfite, which can then be used for L-cysteine biosynthesis. This Glaesserella parasuis serovar 5 (strain SH0165) (Haemophilus parasuis) protein is Thiosulfate sulfurtransferase GlpE.